The following is a 640-amino-acid chain: uncharacterized protein (640 aa).

The disordered stretch occupies residues 594 to 614 (QCSSDHCKPGSSETLPEATNE).

This is an uncharacterized protein from Rattus norvegicus (Rat).